The following is a 356-amino-acid chain: Replication factor C subunit 3 (356 aa).

K20 carries the N6-acetyllysine modification. S125 carries the post-translational modification Phosphoserine.

The protein belongs to the activator 1 small subunits family. Subunit of the RFC complex, an heteropentameric complex consisting of a large subunit RFC1 and four small subunits RFC2, RFC3, RFC4 and RFC5; the RFC complex interacts with PCNA. Forms an heterotetrameric complex with RFC2, RFC4 and RFC5; this complex has ATPase activity but is not stimulated by PCNA. The heterotetramer of subunits RFC2, RFC3, RFC4 and RFC5 interacts with RAD17. Interacts with CNTD1; this interaction facilitates crossover formation.

The protein localises to the nucleus. Its function is as follows. Subunit of the replication factor C (RFC) complex which acts during elongation of primed DNA templates by DNA polymerases delta and epsilon, and is necessary for ATP-dependent loading of proliferating cell nuclear antigen (PCNA) onto primed DNA. The protein is Replication factor C subunit 3 (RFC3) of Bos taurus (Bovine).